The following is a 142-amino-acid chain: Translation initiation factor 2 subunit beta (142 aa).

This sequence belongs to the eIF-2-beta/eIF-5 family. As to quaternary structure, heterotrimer composed of an alpha, a beta and a gamma chain.

EIF-2 functions in the early steps of protein synthesis by forming a ternary complex with GTP and initiator tRNA. This is Translation initiation factor 2 subunit beta from Methanosphaera stadtmanae (strain ATCC 43021 / DSM 3091 / JCM 11832 / MCB-3).